A 55-amino-acid polypeptide reads, in one-letter code: Small integral membrane protein 27 (55 aa).

Residues 11-31 (WIYSVLLLAIVLISWGCIIYA) traverse the membrane as a helical segment.

The protein resides in the membrane. The protein is Small integral membrane protein 27 of Homo sapiens (Human).